The following is an 808-amino-acid chain: Copal-8-ol diphosphate hydratase, chloroplastic (808 aa).

The N-terminal 50 residues, 1-50 (MAFTFTSAHLFLPVTENHSVHVNYSIPPGNWRLWSTAKGGSNKLDIRRLR), are a transit peptide targeting the chloroplast. The stretch at 190–219 (DKCQKGLKFFRDNISKLEKENVEASAQMLS) forms a coiled coil. Substrate is bound at residue K256. The Mg(2+) site is built by D391 and D393. The DXDD motif motif lies at 391–394 (DLDD). K477 is a binding site for substrate.

The protein belongs to the terpene synthase family. It depends on Mg(2+) as a cofactor. As to expression, expressed in stems, leaves and trichomes. Not detected in roots and seeds. Higher expression in young leaves than in fully expanded leaves.

The protein localises to the plastid. Its subcellular location is the chloroplast. The catalysed reaction is (2E,6E,10E)-geranylgeranyl diphosphate + H2O = 8-hydroxycopalyl diphosphate. The protein operates within secondary metabolite biosynthesis; terpenoid biosynthesis. In terms of biological role, involved in the biosynthesis of oxygen-containing labdane-type diterpenes that may be implicated in direct and indirect defense mechanisms. No activity with geranyl diphosphate or farnesyl diphosphate as substrate. In Cistus creticus subsp. creticus (Rock rose), this protein is Copal-8-ol diphosphate hydratase, chloroplastic.